Here is a 224-residue protein sequence, read N- to C-terminus: 2,5-diamino-6-ribosylamino-4(3H)-pyrimidinone 5'-phosphate reductase (224 aa).

NADP(+) contacts are provided by residues T57, D61, 82 to 85, V131, and 153 to 156; these read STAN and GASI.

The protein belongs to the HTP reductase family. Homodimer.

It catalyses the reaction 2,5-diamino-6-(1-D-ribitylamino)pyrimidin-4(3H)-one 5'-phosphate + NADP(+) = 2,5-diamino-6-(1-D-ribosylamino)pyrimidin-4(3H)-one 5'-phosphate + NADPH + H(+). The enzyme catalyses 2,5-diamino-6-(1-D-ribitylamino)pyrimidin-4(3H)-one 5'-phosphate + NAD(+) = 2,5-diamino-6-(1-D-ribosylamino)pyrimidin-4(3H)-one 5'-phosphate + NADH + H(+). Its pathway is cofactor biosynthesis; riboflavin biosynthesis. In terms of biological role, catalyzes an early step in riboflavin biosynthesis, the NADPH-dependent reduction of the ribose side chain of 2,5-diamino-6-ribosylamino-4(3H)-pyrimidinone 5'-phosphate, yielding 2,5-diamino-6-ribitylamino-4(3H)-pyrimidinone 5'-phosphate. The polypeptide is 2,5-diamino-6-ribosylamino-4(3H)-pyrimidinone 5'-phosphate reductase (ribD2) (Aquifex aeolicus (strain VF5)).